Here is a 226-residue protein sequence, read N- to C-terminus: 7-cyano-7-deazaguanine synthase (226 aa).

10–20 is a binding site for ATP; that stretch reads LSGGLDSATAA. Zn(2+) contacts are provided by C191, C199, C202, and C205.

This sequence belongs to the QueC family. Requires Zn(2+) as cofactor.

It catalyses the reaction 7-carboxy-7-deazaguanine + NH4(+) + ATP = 7-cyano-7-deazaguanine + ADP + phosphate + H2O + H(+). It functions in the pathway purine metabolism; 7-cyano-7-deazaguanine biosynthesis. Its function is as follows. Catalyzes the ATP-dependent conversion of 7-carboxy-7-deazaguanine (CDG) to 7-cyano-7-deazaguanine (preQ(0)). This Synechococcus sp. (strain CC9605) protein is 7-cyano-7-deazaguanine synthase.